Here is a 300-residue protein sequence, read N- to C-terminus: U1 small nuclear ribonucleoprotein 70 kDa homolog (300 aa).

One can recognise an RRM domain in the interval 107–198 (RTIFIGRLPY…RTVKYFKPRR (92 aa)). Disordered stretches follow at residues 204–248 (GGRG…AYSA) and 263–300 (NRPL…APDY). Residues 265–279 (PLLSAATPTAAVTSV) are compositionally biased toward low complexity.

In terms of assembly, component of the spliceosome, where it is associated with snRNP U1. Binds stem loop I of U1 snRNA. Interacts with mRNA.

The protein resides in the nucleus. Its function is as follows. Involved in nuclear mRNA splicing. In Saccharomyces cerevisiae (strain ATCC 204508 / S288c) (Baker's yeast), this protein is U1 small nuclear ribonucleoprotein 70 kDa homolog (SNP1).